A 472-amino-acid polypeptide reads, in one-letter code: Coronin-6 (472 aa).

WD repeat units lie at residues 79-119 (GHTG…PVRN), 129-169 (GHSK…VLLS), 173-212 (IHPD…VVAE), 216-259 (AHEG…EPVA), and 264-304 (DTSN…PFVH). A disordered region spans residues 409-434 (NILDVRPPASPRRSQSASEAPLSQQH). Low complexity predominate over residues 419–429 (PRRSQSASEAP). The stretch at 430-469 (LSQQHTLETLLEEMKALRERVQAQEERITALENMLCELVD) forms a coiled coil.

In Rattus norvegicus (Rat), this protein is Coronin-6 (Coro6).